The sequence spans 837 residues: Leucine-zipper-like transcriptional regulator 1 (837 aa).

Position 2 is an N-acetylalanine (Ala-2). Kelch repeat units lie at residues 76–125 (AIYV…VYGS), 127–182 (MFVF…VYSD), 184–235 (LWIF…VCRD), 236–282 (KMFV…QRRY), 292–338 (HLYV…PERA), and 396–447 (AMYI…FVLG). A disordered region spans residues 324–352 (SSDSEVGGAEMPERASSSEDASTLTSEER). BTB domains are found at residues 440–534 (CDVE…KYPR) and 664–733 (CDIT…NMPP).

Belongs to the LZTR1 family. As to quaternary structure, homodimer. Component of the BCR(LZTR1) E3 ubiquitin ligase complex, at least composed of CUL3, LZTR1 and RBX1. Interacts with Ras (K-Ras/KRAS, N-Ras/NRAS and H-Ras/HRAS). Interacts with RAF1. Interacts with SHOC2. Interacts with PPP1CB. Post-translationally, phosphorylated on tyrosine upon induction of apoptosis, leading to its degradation by the proteasome. As to expression, widely expressed.

The protein resides in the endomembrane system. It localises to the recycling endosome. It is found in the golgi apparatus. It participates in protein modification; protein ubiquitination. Its function is as follows. Substrate-specific adapter of a BCR (BTB-CUL3-RBX1) E3 ubiquitin-protein ligase complex that mediates ubiquitination of Ras (K-Ras/KRAS, N-Ras/NRAS and H-Ras/HRAS). Is a negative regulator of RAS-MAPK signaling that acts by controlling Ras levels and decreasing Ras association with membranes. In Mus musculus (Mouse), this protein is Leucine-zipper-like transcriptional regulator 1.